A 665-amino-acid chain; its full sequence is UvrABC system protein B (665 aa).

Residues 25 to 412 form the Helicase ATP-binding domain; it reads ASIEGGNRYQ…ENRIVEQVIR (388 aa). Residue 38-45 participates in ATP binding; the sequence is GATGTGKT. The Beta-hairpin motif lies at 91 to 114; that stretch reads YYDYYQPEAYIPVTDTYIEKTAAI. In terms of domain architecture, Helicase C-terminal spans 429–583; that stretch reads QIDDLLGEIK…VAYNKLHGIT (155 aa). The region spanning 626–661 is the UVR domain; sequence PNLIDKLEAQMKEASKKLEFEEAAKLRDRIKQLRDK.

It belongs to the UvrB family. In terms of assembly, forms a heterotetramer with UvrA during the search for lesions. Interacts with UvrC in an incision complex.

The protein localises to the cytoplasm. Its function is as follows. The UvrABC repair system catalyzes the recognition and processing of DNA lesions. A damage recognition complex composed of 2 UvrA and 2 UvrB subunits scans DNA for abnormalities. Upon binding of the UvrA(2)B(2) complex to a putative damaged site, the DNA wraps around one UvrB monomer. DNA wrap is dependent on ATP binding by UvrB and probably causes local melting of the DNA helix, facilitating insertion of UvrB beta-hairpin between the DNA strands. Then UvrB probes one DNA strand for the presence of a lesion. If a lesion is found the UvrA subunits dissociate and the UvrB-DNA preincision complex is formed. This complex is subsequently bound by UvrC and the second UvrB is released. If no lesion is found, the DNA wraps around the other UvrB subunit that will check the other stand for damage. The sequence is that of UvrABC system protein B from Nostoc sp. (strain PCC 7120 / SAG 25.82 / UTEX 2576).